The chain runs to 638 residues: Cytoplasmic dynein 1 intermediate chain 2 (638 aa).

Composition is skewed to basic and acidic residues over residues 1-13 and 20-43; these read MSDK…ELER and QIRE…KKEA. Disordered stretches follow at residues 1–135 and 154–209; these read MSDK…GRGP and VTYT…HELT. The residue at position 2 (serine 2) is an N-acetylserine. Serine 51 carries the diphosphoserine modification. Residues serine 51 and serine 90 each carry the phosphoserine modification. Residues 88–97 show a composition bias toward low complexity; that stretch reads PSSKSVSTPS. The residue at position 95 (threonine 95) is a Phosphothreonine. 3 positions are modified to phosphoserine: serine 97, serine 101, and serine 104. The interaction with DYNLT1 stretch occupies residues 133–165; that stretch reads RGPIKLGMAKITQVDFPPREIVTYTKETQTPVT. Basic and acidic residues predominate over residues 190 to 209; that stretch reads EKILKKDEENDSKAPPHELT. 6 WD repeats span residues 277 to 326, 330 to 370, 379 to 420, 429 to 469, 474 to 519, and 568 to 607; these read SKHR…TTPE, HCQS…RTPV, AHTH…HPQD, SKAV…AGIS, GHQG…PLYS, and EGNP…AVPR.

The protein belongs to the dynein intermediate chain family. Homodimer. The cytoplasmic dynein 1 complex consists of two catalytic heavy chains (HCs) and a number of non-catalytic subunits presented by intermediate chains (ICs), light intermediate chains (LICs) and light chains (LCs); the composition seems to vary in respect to the IC, LIC and LC composition. The heavy chain homodimer serves as a scaffold for the probable homodimeric assembly of the respective non-catalytic subunits. The ICs and LICs bind directly to the HC dimer and the LCs assemble on the IC dimer. Interacts with DYNLT3. Interacts with DYNLT1. Interacts (dephosphorylated at Ser-90) with DCTN1. Interacts with BICD2. Interacts with SPEF2. Interacts with CFAP61. Post-translationally, the phosphorylation status of Ser-90 appears to be involved in dynactin-dependent target binding. Pyrophosphorylation by 5-diphosphoinositol pentakisphosphate (5-IP7) promotes interaction with DCTN1. Serine pyrophosphorylation is achieved by Mg(2+)-dependent, but enzyme independent transfer of a beta-phosphate from a inositol pyrophosphate to a pre-phosphorylated serine residue. Skeletal muscle, testis, kidney, brain, heart and spleen.

The protein localises to the cytoplasm. The protein resides in the cytoskeleton. In terms of biological role, acts as one of several non-catalytic accessory components of the cytoplasmic dynein 1 complex that are thought to be involved in linking dynein to cargos and to adapter proteins that regulate dynein function. Cytoplasmic dynein 1 acts as a motor for the intracellular retrograde motility of vesicles and organelles along microtubules. The intermediate chains mediate the binding of dynein to dynactin via its 150 kDa component (p150-glued) DCTN1. Involved in membrane-transport, such as Golgi apparatus, late endosomes and lysosomes. In Rattus norvegicus (Rat), this protein is Cytoplasmic dynein 1 intermediate chain 2 (Dync1i2).